A 534-amino-acid chain; its full sequence is NAD(P)H-quinone oxidoreductase subunit 2 (534 aa).

Helical transmembrane passes span 15–35, 42–62, 79–99, 109–129, 132–152, 167–187, 210–230, 244–264, 280–300, 306–326, 334–354, 378–398, 410–432, and 466–486; these read ILPE…DLIL, WIGY…YFQW, LSIV…LMSI, LAEF…LSGA, LVMI…LTGY, LLIG…LYGL, LGLV…ISAA, PTPV…ALAI, FVFT…ALAQ, MLAY…IAGT, IFYL…IILF, LGLS…GFFG, GLYW…YIRV, and VGLV…NPLF.

The protein belongs to the complex I subunit 2 family. In terms of assembly, NDH-1 can be composed of about 15 different subunits; different subcomplexes with different compositions have been identified which probably have different functions.

It localises to the cellular thylakoid membrane. It catalyses the reaction a plastoquinone + NADH + (n+1) H(+)(in) = a plastoquinol + NAD(+) + n H(+)(out). It carries out the reaction a plastoquinone + NADPH + (n+1) H(+)(in) = a plastoquinol + NADP(+) + n H(+)(out). NDH-1 shuttles electrons from an unknown electron donor, via FMN and iron-sulfur (Fe-S) centers, to quinones in the respiratory and/or the photosynthetic chain. The immediate electron acceptor for the enzyme in this species is believed to be plastoquinone. Couples the redox reaction to proton translocation, and thus conserves the redox energy in a proton gradient. Cyanobacterial NDH-1 also plays a role in inorganic carbon-concentration. This chain is NAD(P)H-quinone oxidoreductase subunit 2, found in Nostoc punctiforme (strain ATCC 29133 / PCC 73102).